Reading from the N-terminus, the 553-residue chain is Glutamate--tRNA ligase (553 aa).

The 'HIGH' region motif lies at 98–108 (PNPSGPLHIGH).

It belongs to the class-I aminoacyl-tRNA synthetase family. Glutamate--tRNA ligase type 2 subfamily.

The protein resides in the cytoplasm. It carries out the reaction tRNA(Glu) + L-glutamate + ATP = L-glutamyl-tRNA(Glu) + AMP + diphosphate. Functionally, catalyzes the attachment of glutamate to tRNA(Glu) in a two-step reaction: glutamate is first activated by ATP to form Glu-AMP and then transferred to the acceptor end of tRNA(Glu). The sequence is that of Glutamate--tRNA ligase from Methanocaldococcus jannaschii (strain ATCC 43067 / DSM 2661 / JAL-1 / JCM 10045 / NBRC 100440) (Methanococcus jannaschii).